We begin with the raw amino-acid sequence, 321 residues long: Porphobilinogen deaminase (321 aa).

C246 bears the S-(dipyrrolylmethanemethyl)cysteine mark.

Belongs to the HMBS family. As to quaternary structure, monomer. Dipyrromethane serves as cofactor.

The catalysed reaction is 4 porphobilinogen + H2O = hydroxymethylbilane + 4 NH4(+). It participates in porphyrin-containing compound metabolism; protoporphyrin-IX biosynthesis; coproporphyrinogen-III from 5-aminolevulinate: step 2/4. Its function is as follows. Tetrapolymerization of the monopyrrole PBG into the hydroxymethylbilane pre-uroporphyrinogen in several discrete steps. This is Porphobilinogen deaminase from Helicobacter hepaticus (strain ATCC 51449 / 3B1).